A 212-amino-acid polypeptide reads, in one-letter code: Pyrrolidone-carboxylate peptidase (212 aa).

Residues E80, C143, and H165 contribute to the active site.

It belongs to the peptidase C15 family. Homotetramer.

Its subcellular location is the cytoplasm. It carries out the reaction Release of an N-terminal pyroglutamyl group from a polypeptide, the second amino acid generally not being Pro.. Its function is as follows. Removes 5-oxoproline from various penultimate amino acid residues except L-proline. The chain is Pyrrolidone-carboxylate peptidase from Aliivibrio fischeri (strain MJ11) (Vibrio fischeri).